The chain runs to 396 residues: Succinyl-CoA:mesaconate CoA-transferase (396 aa).

Residue Asp-175 is the Nucleophile of the active site.

This sequence belongs to the CoA-transferase III family.

It carries out the reaction mesaconate + succinyl-CoA = 2-methylfumaryl-CoA + succinate. In terms of biological role, involved in the methylaspartate cycle. Catalyzes the transfer of the CoA moiety from succinyl-CoA to mesaconate to generate mesaconyl-CoA (2-methylfumaryl-CoA) and succinate. In Haloarcula marismortui (strain ATCC 43049 / DSM 3752 / JCM 8966 / VKM B-1809) (Halobacterium marismortui), this protein is Succinyl-CoA:mesaconate CoA-transferase.